Here is a 67-residue protein sequence, read N- to C-terminus: Tachystatin-A2 (67 aa).

Positions 1–23 (MKLQNTLILIGCLFLMGAMIGDA) are cleaved as a signal peptide. Cystine bridges form between Cys27–Cys47, Cys34–Cys52, and Cys46–Cys64.

In terms of tissue distribution, granular hemocytes, small secretory granules.

The protein resides in the secreted. In terms of biological role, exhibits stronger antimicrobial activity against the Gram-positive bacteria (S.aureus (IC(50)=4.2 ug/ml)) and fungi (C.albicans (IC(50)=3.0 ug/ml) and P.pastoris (IC(50)=0.5 ug/ml)) than Gram-negative bacteria (E.coli (IC(50)=25 ug/ml)). Binds to chitin (8.4 uM are required to obtain 50% of binding). Does not cause hemolysis on sheep erythrocytes. Has no blocking activity on the P-type calcium channel. Has also been shown to weakly inhibit Kv1.2/KCNA2 voltage-gated potassium channels and TRPV1 receptors. In Tachypleus tridentatus (Japanese horseshoe crab), this protein is Tachystatin-A2.